We begin with the raw amino-acid sequence, 174 residues long: MGKITFYEDRGFQGRHYECSSDHSNLQPYFSRCNSIRVDSGCWMLYEQPNFQGPQYFLRRGDYPDYQQWMGLNDSIRSCRLIPHTGSHRLRIYEREDYRGQMVEITEDCSSLHDRFHFSEIHSFNVLEGWWVLYEMTNYRGRQYLLRPGDYRRYHDWGATNARVGSLRRAVDFY.

2 consecutive Beta/gamma crystallin 'Greek key' domains span residues 2 to 40 (GKIT…RVDS) and 41 to 83 (GCWM…RLIP). The connecting peptide stretch occupies residues 84–87 (HTGS). Beta/gamma crystallin 'Greek key' domains are found at residues 88 to 128 (HRLR…NVLE) and 129 to 171 (GWWV…RRAV).

It belongs to the beta/gamma-crystallin family.

In terms of biological role, crystallins are the dominant structural components of the vertebrate eye lens. The chain is Gamma-crystallin F (CRYGF) from Bos taurus (Bovine).